A 309-amino-acid chain; its full sequence is Histone-lysine N-methyltransferase SETMAR (309 aa).

The Pre-SET domain occupies Pro-74–Gly-137. Cys-76, Cys-78, Cys-83, Cys-88, Cys-90, Cys-119, Cys-123, Cys-125, and Cys-129 together coordinate Zn(2+). An SET domain is found at Phe-140–Ser-264. S-adenosyl-L-methionine is bound by residues Lys-150–Trp-152, Tyr-193, Arg-221, and Asn-224–His-225. Residues Cys-227, Cys-288, Cys-290, and Cys-295 each coordinate Zn(2+). Positions Pro-284–Pro-300 constitute a Post-SET domain.

The protein belongs to the class V-like SAM-binding methyltransferase superfamily.

Its subcellular location is the nucleus. It is found in the chromosome. The catalysed reaction is L-lysyl(36)-[histone H3] + 2 S-adenosyl-L-methionine = N(6),N(6)-dimethyl-L-lysyl(36)-[histone H3] + 2 S-adenosyl-L-homocysteine + 2 H(+). Histone methyltransferase that methylates 'Lys-4' and 'Lys-36' of histone H3, 2 specific tags for epigenetic transcriptional activation. Specifically mediates dimethylation of H3 'Lys-36'. The sequence is that of Histone-lysine N-methyltransferase SETMAR from Mus musculus (Mouse).